A 417-amino-acid chain; its full sequence is Diaminopimelate decarboxylase (417 aa).

Lys-61 is subject to N6-(pyridoxal phosphate)lysine. Residues Gly-240 and 275–278 (EPGR) each bind pyridoxal 5'-phosphate. Substrate-binding residues include Arg-278, Arg-314, and Tyr-318. The Proton donor role is filled by Cys-344. Substrate contacts are provided by Glu-345 and Tyr-372. Tyr-372 is a binding site for pyridoxal 5'-phosphate.

It belongs to the Orn/Lys/Arg decarboxylase class-II family. LysA subfamily. As to quaternary structure, homodimer. Pyridoxal 5'-phosphate is required as a cofactor.

It catalyses the reaction meso-2,6-diaminopimelate + H(+) = L-lysine + CO2. It participates in amino-acid biosynthesis; L-lysine biosynthesis via DAP pathway; L-lysine from DL-2,6-diaminopimelate: step 1/1. In terms of biological role, specifically catalyzes the decarboxylation of meso-diaminopimelate (meso-DAP) to L-lysine. This chain is Diaminopimelate decarboxylase (lysA), found in Vibrio cholerae serotype O1 (strain ATCC 39315 / El Tor Inaba N16961).